We begin with the raw amino-acid sequence, 235 residues long: MSEILCTICARGGSKGVKNKNIRKINDLEMIAYSIIQAKNSKLFKHIVISTDSEEIAKIALKYGGEVFFKREAHLASDTAAKIPVMRDALLRSEEYFKCQFDTLIDLDASAPLRSSADIIKAFETFCQNQNDNLITAVPARRNPYFNLIEVQDGKVVKSKSGNFTTRQSVPKCYDMNASIYIFKRDFLLQNDSVFGKNTGLFIMDESTAFDVDSELDFKIVEFLIKEKNLQAKDF.

Belongs to the CMP-NeuNAc synthase family.

Its function is as follows. Required for biosynthesis of LAH modification in the post-translational modification of Campylobacter coli flagellin. This is Post-translational flagellin modification protein B (ptmB) from Campylobacter coli.